Here is a 397-residue protein sequence, read N- to C-terminus: Phosphoglycerate kinase (397 aa).

Residues 21-23, arginine 37, 60-63, arginine 119, and arginine 152 each bind substrate; these read DFN and HLGR. Residues lysine 203, glycine 294, glutamate 325, and 354–357 each bind ATP; that span reads GGDS.

It belongs to the phosphoglycerate kinase family. In terms of assembly, monomer.

It is found in the cytoplasm. The enzyme catalyses (2R)-3-phosphoglycerate + ATP = (2R)-3-phospho-glyceroyl phosphate + ADP. It participates in carbohydrate degradation; glycolysis; pyruvate from D-glyceraldehyde 3-phosphate: step 2/5. This Chlorobium chlorochromatii (strain CaD3) protein is Phosphoglycerate kinase.